Here is a 271-residue protein sequence, read N- to C-terminus: 4-diphosphocytidyl-2-C-methyl-D-erythritol kinase (271 aa).

Residue Lys8 is part of the active site. An ATP-binding site is contributed by 90–100 (PFGAGLGGGSA). The active site involves Asp132.

It belongs to the GHMP kinase family. IspE subfamily.

It carries out the reaction 4-CDP-2-C-methyl-D-erythritol + ATP = 4-CDP-2-C-methyl-D-erythritol 2-phosphate + ADP + H(+). The protein operates within isoprenoid biosynthesis; isopentenyl diphosphate biosynthesis via DXP pathway; isopentenyl diphosphate from 1-deoxy-D-xylulose 5-phosphate: step 3/6. Functionally, catalyzes the phosphorylation of the position 2 hydroxy group of 4-diphosphocytidyl-2C-methyl-D-erythritol. The sequence is that of 4-diphosphocytidyl-2-C-methyl-D-erythritol kinase from Parabacteroides distasonis (strain ATCC 8503 / DSM 20701 / CIP 104284 / JCM 5825 / NCTC 11152).